The following is a 500-amino-acid chain: Coiled-coil domain-containing protein 125 (500 aa).

A disordered region spans residues 1 to 105 (MSKVPRSSSE…TDSNSELSDE (105 aa)). Over residues 10–23 (EAEDIWETEDDMTE) the composition is skewed to acidic residues. Positions 92 to 101 (RLSSTDSNSE) are enriched in polar residues. Coiled coils occupy residues 101–237 (ELSD…LEAL) and 286–314 (STRK…TADA). At Ser-492 the chain carries Phosphoserine.

In terms of tissue distribution, expressed in many tissues, with highest levels in spleen, thymus and bone marrow.

Its subcellular location is the cytoplasm. Functionally, may be involved in the regulation of cell migration. The protein is Coiled-coil domain-containing protein 125 (Ccdc125) of Mus musculus (Mouse).